The primary structure comprises 127 residues: Mitochondrial pyruvate carrier 2 (127 aa).

The Mitochondrial matrix portion of the chain corresponds to 2-40 (SAAGARGLRATYHRLLDKVELMLPEKLRPLYNHPAGPRT). Residues 41–61 (VFFWAPIMKRGLVCAGLADMA) form a helical membrane-spanning segment. Residues 62–72 (RPAEKLSTAQS) lie on the Mitochondrial intermembrane side of the membrane. The helical transmembrane segment at 73–90 (AVLMATGFIWSRYSLVII) threads the bilayer. The Mitochondrial matrix portion of the chain corresponds to 91 to 95 (PKNWS). Residues 96–115 (LFAVNFFVGAAGASQLFRIW) form a helical membrane-spanning segment. Residues 116–127 (RYNQELKAKAHK) are Mitochondrial intermembrane-facing.

The protein belongs to the mitochondrial pyruvate carrier (MPC) (TC 2.A.105) family. As to quaternary structure, homodimer. Homooligomer. Forms heterodimers with MPC1 and MPC1L. The heterodimer is the more stable and dominant form.

The protein resides in the mitochondrion inner membrane. It carries out the reaction pyruvate(out) + H(+)(out) = pyruvate(in) + H(+)(in). In terms of biological role, mediates the uptake of pyruvate into mitochondria. The sequence is that of Mitochondrial pyruvate carrier 2 (MPC2) from Pongo abelii (Sumatran orangutan).